Consider the following 256-residue polypeptide: Thiazole synthase (256 aa).

Lys95 functions as the Schiff-base intermediate with DXP in the catalytic mechanism. Residues Gly156, 182 to 183 (AG), and 204 to 205 (NT) each bind 1-deoxy-D-xylulose 5-phosphate.

The protein belongs to the ThiG family. Homotetramer. Forms heterodimers with either ThiH or ThiS.

It localises to the cytoplasm. It catalyses the reaction [ThiS sulfur-carrier protein]-C-terminal-Gly-aminoethanethioate + 2-iminoacetate + 1-deoxy-D-xylulose 5-phosphate = [ThiS sulfur-carrier protein]-C-terminal Gly-Gly + 2-[(2R,5Z)-2-carboxy-4-methylthiazol-5(2H)-ylidene]ethyl phosphate + 2 H2O + H(+). Its pathway is cofactor biosynthesis; thiamine diphosphate biosynthesis. In terms of biological role, catalyzes the rearrangement of 1-deoxy-D-xylulose 5-phosphate (DXP) to produce the thiazole phosphate moiety of thiamine. Sulfur is provided by the thiocarboxylate moiety of the carrier protein ThiS. In vitro, sulfur can be provided by H(2)S. In Salmonella agona (strain SL483), this protein is Thiazole synthase.